The primary structure comprises 141 residues: Endoribonuclease YbeY (141 aa).

H100, H104, and H110 together coordinate Zn(2+).

The protein belongs to the endoribonuclease YbeY family. Zn(2+) serves as cofactor.

It localises to the cytoplasm. In terms of biological role, single strand-specific metallo-endoribonuclease involved in late-stage 70S ribosome quality control and in maturation of the 3' terminus of the 16S rRNA. This chain is Endoribonuclease YbeY, found in Helicobacter pylori (strain J99 / ATCC 700824) (Campylobacter pylori J99).